The following is a 186-amino-acid chain: ATP synthase subunit delta (186 aa).

The protein belongs to the ATPase delta chain family. In terms of assembly, F-type ATPases have 2 components, F(1) - the catalytic core - and F(0) - the membrane proton channel. F(1) has five subunits: alpha(3), beta(3), gamma(1), delta(1), epsilon(1). F(0) has three main subunits: a(1), b(2) and c(10-14). The alpha and beta chains form an alternating ring which encloses part of the gamma chain. F(1) is attached to F(0) by a central stalk formed by the gamma and epsilon chains, while a peripheral stalk is formed by the delta and b chains.

The protein resides in the cell membrane. F(1)F(0) ATP synthase produces ATP from ADP in the presence of a proton or sodium gradient. F-type ATPases consist of two structural domains, F(1) containing the extramembraneous catalytic core and F(0) containing the membrane proton channel, linked together by a central stalk and a peripheral stalk. During catalysis, ATP synthesis in the catalytic domain of F(1) is coupled via a rotary mechanism of the central stalk subunits to proton translocation. In terms of biological role, this protein is part of the stalk that links CF(0) to CF(1). It either transmits conformational changes from CF(0) to CF(1) or is implicated in proton conduction. In Wolbachia pipientis wMel, this protein is ATP synthase subunit delta.